We begin with the raw amino-acid sequence, 147 residues long: Hemoglobin subunit beta (147 aa).

V2 is subject to N-acetylvaline. Positions 3–147 (HLTAEEKAAV…VATALAHKYH (145 aa)) constitute a Globin domain. A Phosphothreonine modification is found at T13. S45 bears the Phosphoserine mark. K60 carries the N6-acetyllysine modification. H64 provides a ligand contact to heme b. At K83 the chain carries N6-acetyllysine. A heme b-binding site is contributed by H93. An S-nitrosocysteine modification is found at C94. K145 is subject to N6-acetyllysine.

It belongs to the globin family. In terms of assembly, heterotetramer of two alpha chains and two beta chains. Red blood cells.

Its function is as follows. Involved in oxygen transport from the lung to the various peripheral tissues. The sequence is that of Hemoglobin subunit beta (HBB) from Carlito syrichta (Philippine tarsier).